The chain runs to 91 residues: Small ribosomal subunit protein uS19 (91 aa).

The protein belongs to the universal ribosomal protein uS19 family.

In terms of biological role, protein S19 forms a complex with S13 that binds strongly to the 16S ribosomal RNA. The chain is Small ribosomal subunit protein uS19 from Lachnospira eligens (strain ATCC 27750 / DSM 3376 / VPI C15-48 / C15-B4) (Eubacterium eligens).